The primary structure comprises 1176 residues: Pesticidal crystal protein Cry1Ag (1176 aa).

It belongs to the delta endotoxin family.

Functionally, promotes colloidosmotic lysis by binding to the midgut epithelial cells of many lepidopteran larvae. In Bacillus thuringiensis, this protein is Pesticidal crystal protein Cry1Ag (cry1Ag).